The primary structure comprises 72 residues: Large ribosomal subunit protein bL31 (72 aa).

It belongs to the bacterial ribosomal protein bL31 family. Type A subfamily. In terms of assembly, part of the 50S ribosomal subunit.

In terms of biological role, binds the 23S rRNA. The sequence is that of Large ribosomal subunit protein bL31 from Rhodospirillum rubrum (strain ATCC 11170 / ATH 1.1.1 / DSM 467 / LMG 4362 / NCIMB 8255 / S1).